Consider the following 405-residue polypeptide: L-rhamnonate dehydratase (405 aa).

Residues His-33 and Arg-59 each contribute to the substrate site. Residues Asp-226, Glu-252, and Glu-280 each contribute to the Mg(2+) site. His-329 functions as the Proton acceptor in the catalytic mechanism. Glu-349 contributes to the substrate binding site.

It belongs to the mandelate racemase/muconate lactonizing enzyme family. RhamD subfamily. Homooctamer; tetramer of dimers. It depends on Mg(2+) as a cofactor.

It carries out the reaction L-rhamnonate = 2-dehydro-3-deoxy-L-rhamnonate + H2O. Functionally, catalyzes the dehydration of L-rhamnonate to 2-keto-3-deoxy-L-rhamnonate (KDR). Can also dehydrate L-lyxonate and L-mannonate, although less efficiently, but not 2-keto-4-hydroxyheptane-1,7-dioate. The sequence is that of L-rhamnonate dehydratase (rhmD) from Salmonella typhimurium (strain LT2 / SGSC1412 / ATCC 700720).